Here is a 409-residue protein sequence, read N- to C-terminus: N-acetylglucosamine-6-phosphate deacetylase (409 aa).

Residue Glu-143 participates in a divalent metal cation binding. 154–155 is a substrate binding site; sequence AH. 2 residues coordinate a divalent metal cation: His-211 and His-232. Residues 235–236, Arg-243, and 269–272 contribute to the substrate site; these read NA and DGIH. The Proton donor/acceptor role is filled by Asp-294. 328–330 serves as a coordination point for substrate; it reads LSG.

It belongs to the metallo-dependent hydrolases superfamily. NagA family. A divalent metal cation serves as cofactor.

The catalysed reaction is N-acetyl-D-glucosamine 6-phosphate + H2O = D-glucosamine 6-phosphate + acetate. It participates in amino-sugar metabolism; N-acetylneuraminate degradation. Its function is as follows. Hydrolyzes the N-glycolyl group from N-glycolylglucosamine 6-phosphate (GlcNGc-6-P) in the N-glycolylneuraminic acid (Neu5Gc) degradation pathway. This Rattus norvegicus (Rat) protein is N-acetylglucosamine-6-phosphate deacetylase (Amdhd2).